The following is a 162-amino-acid chain: Caveolin-2 (162 aa).

Residues 1 to 86 (MGLETEKADV…FEISKYVMYK (86 aa)) lie on the Cytoplasmic side of the membrane. The residue at position 19 (Y19) is a Phosphotyrosine; by SRC. 2 positions are modified to phosphoserine: S20 and S23. At Y27 the chain carries Phosphotyrosine; by SRC. Residue S36 is modified to Phosphoserine. The helical intramembrane region spans 87–107 (FLTVFLAIPLAFLAGILFATL). Residues 108-162 (SCLHIWIIMPFVKTCLMVLPSVQTIWKSVTDAIIAPLCTSIGRSFSSVSLQLSQD) lie on the Cytoplasmic side of the membrane.

This sequence belongs to the caveolin family. In terms of assembly, monomer or homodimer. Interacts with CAV1; the interaction forms a stable heterooligomeric complex that is required for targeting to lipid rafts and for caveolae formation. Tyrosine phosphorylated forms do not form heterooligomers with the Tyr-19-phosphorylated form existing as a monomer or dimer, and the Tyr-27-form as a monomer only. Interacts (tyrosine phosphorylated form) with the SH2 domain-containing proteins, RASA1, NCK1 and SRC. Interacts (tyrosine phosphorylated form) with INSR, the interaction (Tyr-27-phosphorylated form) is increased on insulin stimulation. Interacts (Tyr-19 phosphorylated form) with MAPK1 (phosphorylated form); the interaction, promoted by insulin, leads to nuclear location and MAPK1 activation. Interacts with STAT3; the interaction is increased on insulin-induced tyrosine phosphorylation leading to STAT activation. Phosphorylated on serine and tyrosine residues. CAV1 promotes phosphorylation on Ser-23 which then targets the complex to the plasma membrane, lipid rafts and caveolae. Phosphorylation on Ser-36 appears to modulate mitosis in endothelial cells. Phosphorylation on both Tyr-19 and Tyr-27 is required for insulin-induced 'Ser-727' phosphorylation of STAT3 and its activation. Phosphorylation on Tyr-19 is required for insulin-induced phosphorylation of MAPK1 and DNA binding of STAT3. Tyrosine phosphorylation is induced by both EGF and insulin (By. similarity).

Its subcellular location is the nucleus. It localises to the cytoplasm. It is found in the golgi apparatus membrane. The protein localises to the cell membrane. The protein resides in the membrane. Its subcellular location is the caveola. Functionally, may act as a scaffolding protein within caveolar membranes. Interacts directly with G-protein alpha subunits and can functionally regulate their activity. Acts as an accessory protein in conjunction with CAV1 in targeting to lipid rafts and driving caveolae formation. The Ser-36 phosphorylated form has a role in modulating mitosis in endothelial cells. Positive regulator of cellular mitogenesis of the MAPK signaling pathway. Required for the insulin-stimulated nuclear translocation and activation of MAPK1 and STAT3, and the subsequent regulation of cell cycle progression. The protein is Caveolin-2 (CAV2) of Callithrix jacchus (White-tufted-ear marmoset).